Consider the following 194-residue polypeptide: MIGLRPAFSTMLFLLLLTGGVYPLLTTALGQWWFPWQANGSLIHKDNVIRGSALIGQSFTAAGYFHGRPSATADTPYNPLASGGSNLAASNPELDAQIQARVAALRAANPQASSAVPVELATASASGLDNNLTPGAAAWQIPRVAAARQLPVEQVAQLVAEYTHRPLARFLGQPVVNIVELNLALDALQGHRAK.

A helical transmembrane segment spans residues 12–34; that stretch reads LFLLLLTGGVYPLLTTALGQWWF.

Belongs to the KdpC family. As to quaternary structure, the system is composed of three essential subunits: KdpA, KdpB and KdpC.

Its subcellular location is the cell inner membrane. Functionally, part of the high-affinity ATP-driven potassium transport (or Kdp) system, which catalyzes the hydrolysis of ATP coupled with the electrogenic transport of potassium into the cytoplasm. This subunit acts as a catalytic chaperone that increases the ATP-binding affinity of the ATP-hydrolyzing subunit KdpB by the formation of a transient KdpB/KdpC/ATP ternary complex. This is Potassium-transporting ATPase KdpC subunit from Salmonella agona (strain SL483).